The following is a 235-amino-acid chain: Pyridoxine 5'-phosphate synthase (235 aa).

Residue Asn-7 participates in 3-amino-2-oxopropyl phosphate binding. 9-10 (DH) serves as a coordination point for 1-deoxy-D-xylulose 5-phosphate. Arg-18 contributes to the 3-amino-2-oxopropyl phosphate binding site. His-43 serves as the catalytic Proton acceptor. Residues Arg-45 and His-50 each contribute to the 1-deoxy-D-xylulose 5-phosphate site. Glu-70 acts as the Proton acceptor in catalysis. Thr-100 provides a ligand contact to 1-deoxy-D-xylulose 5-phosphate. Catalysis depends on His-187, which acts as the Proton donor. 3-amino-2-oxopropyl phosphate-binding positions include Gly-188 and 209–210 (GH).

It belongs to the PNP synthase family. As to quaternary structure, homooctamer; tetramer of dimers.

The protein localises to the cytoplasm. It catalyses the reaction 3-amino-2-oxopropyl phosphate + 1-deoxy-D-xylulose 5-phosphate = pyridoxine 5'-phosphate + phosphate + 2 H2O + H(+). It participates in cofactor biosynthesis; pyridoxine 5'-phosphate biosynthesis; pyridoxine 5'-phosphate from D-erythrose 4-phosphate: step 5/5. In terms of biological role, catalyzes the complicated ring closure reaction between the two acyclic compounds 1-deoxy-D-xylulose-5-phosphate (DXP) and 3-amino-2-oxopropyl phosphate (1-amino-acetone-3-phosphate or AAP) to form pyridoxine 5'-phosphate (PNP) and inorganic phosphate. The polypeptide is Pyridoxine 5'-phosphate synthase (Desulfatibacillum aliphaticivorans).